The chain runs to 95 residues: Selenoprotein K (95 aa).

A helical membrane pass occupies residues Leu-20–Ile-42. A disordered region spans residues Arg-48–Arg-95. Residue Sec-93 is a non-standard amino acid, selenocysteine.

It belongs to the selenoprotein K family.

It localises to the endoplasmic reticulum membrane. The protein localises to the cell membrane. Functionally, required for Ca(2+) flux in immune cells and plays a role in T-cell proliferation and in T-cell and neutrophil migration. Involved in endoplasmic reticulum-associated degradation (ERAD) of soluble glycosylated proteins. Required for cell surface expression of CD36 and involved in macrophage uptake of low-density lipoprotein and in foam cell formation. Required for palmitoylation. This Xenopus tropicalis (Western clawed frog) protein is Selenoprotein K (selenok).